The chain runs to 433 residues: Sulfhydrylase FUB7 (433 aa).

N6-(pyridoxal phosphate)lysine is present on Lys-211.

It belongs to the trans-sulfuration enzymes family. Requires pyridoxal 5'-phosphate as cofactor.

Its pathway is mycotoxin biosynthesis. Sulfhydrylase; part of the gene cluster that mediates the biosynthesis of fusaric acid, a mycotoxin with low to moderate toxicity to animals and humans, but with high phytotoxic properties. L-aspartate is suggested as fusaric acid amino acid precursor that is activated and further processed to O-acetyl-L-homoserine by cluster enzymes aspartate kinase FUB3 and homoserine O-acetyltransferase FUB5, as well as enzymes of the primary metabolism. The polyketide synthase (PKS) FUB1 generates the triketide trans-2-hexenal which is presumptively released by the hydrolase FUB4 and linked to the NRPS-bound amino acid precursor by NAD(P)-dependent dehydrogenase FUB6. FUB1, FUB4, and the non-canonical NRPS Fub8 may form an enzyme complex. Further processing of the NRPS-bound intermediate might be carried out by FUB6 and the sulfhydrylase FUB7, enabling a spontaneous electrocyclization to close the carbon backbone of fusaric acid. Dihydrofusaric acid is likely to be released via reduction by the thioester reductase (TR) domain of FUB8 whereupon the final oxidation to fusaric acid may (also) be performed by the FMN-dependent dehydrogenase FUB9. The chain is Sulfhydrylase FUB7 from Fusarium oxysporum f. sp. lycopersici (strain 4287 / CBS 123668 / FGSC 9935 / NRRL 34936) (Fusarium vascular wilt of tomato).